The chain runs to 534 residues: (R)-citramalate synthase (534 aa).

The region spanning phenylalanine 11 to arginine 274 is the Pyruvate carboxyltransferase domain.

This sequence belongs to the alpha-IPM synthase/homocitrate synthase family.

The enzyme catalyses pyruvate + acetyl-CoA + H2O = (3R)-citramalate + CoA + H(+). It participates in amino-acid biosynthesis; L-isoleucine biosynthesis; 2-oxobutanoate from pyruvate: step 1/3. Its function is as follows. Catalyzes the condensation of pyruvate and acetyl-coenzyme A to form (R)-citramalate. This Streptomyces coelicolor (strain ATCC BAA-471 / A3(2) / M145) protein is (R)-citramalate synthase.